Here is a 639-residue protein sequence, read N- to C-terminus: 1-deoxy-D-xylulose-5-phosphate synthase (639 aa).

Thiamine diphosphate-binding positions include histidine 79 and alanine 120–serine 122. Aspartate 151 is a Mg(2+) binding site. Residues glycine 152 to alanine 153, asparagine 180, tyrosine 289, and glutamate 371 contribute to the thiamine diphosphate site. Asparagine 180 contributes to the Mg(2+) binding site.

Belongs to the transketolase family. DXPS subfamily. As to quaternary structure, homodimer. It depends on Mg(2+) as a cofactor. Requires thiamine diphosphate as cofactor.

The catalysed reaction is D-glyceraldehyde 3-phosphate + pyruvate + H(+) = 1-deoxy-D-xylulose 5-phosphate + CO2. The protein operates within metabolic intermediate biosynthesis; 1-deoxy-D-xylulose 5-phosphate biosynthesis; 1-deoxy-D-xylulose 5-phosphate from D-glyceraldehyde 3-phosphate and pyruvate: step 1/1. Functionally, catalyzes the acyloin condensation reaction between C atoms 2 and 3 of pyruvate and glyceraldehyde 3-phosphate to yield 1-deoxy-D-xylulose-5-phosphate (DXP). The protein is 1-deoxy-D-xylulose-5-phosphate synthase of Rhizorhabdus wittichii (strain DSM 6014 / CCUG 31198 / JCM 15750 / NBRC 105917 / EY 4224 / RW1) (Sphingomonas wittichii).